The chain runs to 301 residues: Dihydroorotate dehydrogenase B (NAD(+)), catalytic subunit (301 aa).

Substrate is bound by residues Lys44, 68-72 (NAMGL), and Asn122. 44-45 (KS) is an FMN binding site. Position 122 (Asn122) interacts with FMN. Residue Cys125 is the Nucleophile of the active site. The FMN site is built by Lys160 and Ile186. 187-188 (NT) contacts substrate. FMN-binding positions include Gly212, 238–239 (GG), and 260–261 (GS).

Belongs to the dihydroorotate dehydrogenase family. Type 1 subfamily. In terms of assembly, heterotetramer of 2 PyrK and 2 PyrD type B subunits. FMN is required as a cofactor.

It is found in the cytoplasm. It carries out the reaction (S)-dihydroorotate + NAD(+) = orotate + NADH + H(+). Its pathway is pyrimidine metabolism; UMP biosynthesis via de novo pathway; orotate from (S)-dihydroorotate (NAD(+) route): step 1/1. Catalyzes the conversion of dihydroorotate to orotate with NAD(+) as electron acceptor. The sequence is that of Dihydroorotate dehydrogenase B (NAD(+)), catalytic subunit (pyrD) from Methanocella arvoryzae (strain DSM 22066 / NBRC 105507 / MRE50).